A 468-amino-acid chain; its full sequence is ATP synthase subunit beta (468 aa).

Gly155–Thr162 provides a ligand contact to ATP.

The protein belongs to the ATPase alpha/beta chains family. As to quaternary structure, F-type ATPases have 2 components, CF(1) - the catalytic core - and CF(0) - the membrane proton channel. CF(1) has five subunits: alpha(3), beta(3), gamma(1), delta(1), epsilon(1). CF(0) has three main subunits: a(1), b(2) and c(9-12). The alpha and beta chains form an alternating ring which encloses part of the gamma chain. CF(1) is attached to CF(0) by a central stalk formed by the gamma and epsilon chains, while a peripheral stalk is formed by the delta and b chains.

The protein localises to the cell membrane. It carries out the reaction ATP + H2O + 4 H(+)(in) = ADP + phosphate + 5 H(+)(out). Functionally, produces ATP from ADP in the presence of a proton gradient across the membrane. The catalytic sites are hosted primarily by the beta subunits. In Streptococcus pyogenes serotype M3 (strain ATCC BAA-595 / MGAS315), this protein is ATP synthase subunit beta.